The chain runs to 487 residues: Glutamyl-tRNA(Gln) amidotransferase subunit A (487 aa).

Active-site charge relay system residues include Lys-77 and Ser-152. Ser-176 acts as the Acyl-ester intermediate in catalysis.

Belongs to the amidase family. GatA subfamily. In terms of assembly, heterotrimer of A, B and C subunits.

The catalysed reaction is L-glutamyl-tRNA(Gln) + L-glutamine + ATP + H2O = L-glutaminyl-tRNA(Gln) + L-glutamate + ADP + phosphate + H(+). Allows the formation of correctly charged Gln-tRNA(Gln) through the transamidation of misacylated Glu-tRNA(Gln) in organisms which lack glutaminyl-tRNA synthetase. The reaction takes place in the presence of glutamine and ATP through an activated gamma-phospho-Glu-tRNA(Gln). This is Glutamyl-tRNA(Gln) amidotransferase subunit A from Lactiplantibacillus plantarum (strain ATCC BAA-793 / NCIMB 8826 / WCFS1) (Lactobacillus plantarum).